The chain runs to 184 residues: UPF0149 protein PSPA7_5968 (184 aa).

It belongs to the UPF0149 family.

The chain is UPF0149 protein PSPA7_5968 from Pseudomonas paraeruginosa (strain DSM 24068 / PA7) (Pseudomonas aeruginosa (strain PA7)).